A 1125-amino-acid polypeptide reads, in one-letter code: Telomerase reverse transcriptase (1125 aa).

Residues 1 to 234 (MPRAPRCRAV…ARRRRSSARG (234 aa)) are RNA-interacting domain 1. Positions 58–199 (VPWDAQPPPA…RQVGGTRAGF (142 aa)) are GQ motif. A required for regulating specificity for telomeric DNA and for processivity for primer elongation region spans residues 137–141 (WGLLL). Positions 186–308 (RRPTRQVGGT…WRLSPSEGEP (123 aa)) are disordered. Positions 224–243 (GARRRRSSARGRLPPAKRPR) are enriched in basic residues. Positions 226–244 (RRRRSSARGRLPPAKRPRR) match the Bipartite nuclear localization signal motif. S231 carries the phosphoserine; by PKB/AKT1 modification. A linker region spans residues 235–312 (RLPPAKRPRR…PSEGEPGAGA (78 aa)). Basic and acidic residues-rich tracts occupy residues 244–253 (RGLEPGRDLE) and 269–279 (DAAEAKSRKGD). Residues 290–531 (GERGVGSASW…VPAAEHRQRE (242 aa)) are required for oligomerization. Residues 313–543 (CAETKRFLYC…LGRFLHWLMG (231 aa)) form an RNA-interacting domain 2 region. The TFLY; involved in RNA binding signature appears at 316–321 (TKRFLY). The QFP motif stretch occupies residues 364–514 (PRRPRRLPAR…MKVQDCAWLR (151 aa)). Residues 385-405 (LGNHARSPYGALLRAHCPLPA) are CP motif. Phosphoserine; by DYRK2 is present on S450. The 331-residue stretch at 598–928 (EVRQHQEARP…CLFPWCGLLL (331 aa)) folds into the Reverse transcriptase domain. Phosphotyrosine; by SRC-type Tyr-kinases is present on Y700. Residues D705, D861, and D862 each contribute to the Mg(2+) site. The tract at residues 907-921 (LGGAAPLQLPAHCLF) is required for oligomerization. A primer grip sequence region spans residues 923-927 (WCGLL). The CTE stretch occupies residues 929–1125 (DTRTLEVHGD…LTADFKTILD (197 aa)).

It belongs to the reverse transcriptase family. Telomerase subfamily. Catalytic component of the telomerase holoenzyme complex composed of one molecule of TERT, one molecule of WRAP53/TCAB1, two molecules of H/ACA ribonucleoprotein complex subunits DKC1, NOP10, NHP2 and GAR1, and a telomerase RNA template component (TERC). The telomerase holoenzyme complex is associated with TEP1, SMG6/EST1A and POT1. The molecular chaperone HSP90/P23 complex is required for correct assembly and stabilization of the active telomerase. Interacts directly with HSP90A and PTGES3. Interacts with HSPA1A; the interaction occurs in the absence of TERC and dissociates once the complex has formed. Interacts with RAN; the interaction promotes nuclear export of TERT. Interacts with XPO1. Interacts with PTPN11; the interaction retains TERT in the nucleus. Interacts with NCL (via RRM1 and C-terminal RRM4/Arg/Gly-rich domains); the interaction is important for nucleolar localization of TERT. Interacts with SMARCA4 (via the bromodomain); the interaction regulates Wnt-mediated signaling. Interacts with MCRS1 (isoform MCRS2); the interaction inhibits in vitro telomerase activity. Interacts with PIF1; the interaction has no effect on the elongation activity of TERT. Interacts with PML; the interaction recruits TERT to PML bodies and inhibits telomerase activity. Interacts with GNL3L. Interacts with isoform 1 and isoform 2 of NVL. Interacts with DHX36. Interacts with ATF7. Phosphorylation at Tyr-700 under oxidative stress leads to translocation of TERT to the cytoplasm and reduces its antiapoptotic activity. Dephosphorylated by SHP2/PTPN11 leading to nuclear retention. Phosphorylation at Ser-231 by the AKT pathway promotes nuclear location. Phosphorylation at the G2/M phase at Ser-450 by DYRK2 promotes ubiquitination by the EDVP complex and degradation. In terms of processing, ubiquitinated by the EDVP complex, a E3 ligase complex following phosphorylation at Ser-450 by DYRK2. Ubiquitinated leads to proteasomal degradation.

The protein resides in the nucleus. It is found in the nucleolus. The protein localises to the nucleoplasm. Its subcellular location is the chromosome. It localises to the telomere. The protein resides in the cytoplasm. It is found in the PML body. It carries out the reaction DNA(n) + a 2'-deoxyribonucleoside 5'-triphosphate = DNA(n+1) + diphosphate. Functionally, telomerase is a ribonucleoprotein enzyme essential for the replication of chromosome termini in most eukaryotes. Active in progenitor and cancer cells. Inactive, or very low activity, in normal somatic cells. Catalytic component of the teleromerase holoenzyme complex whose main activity is the elongation of telomeres by acting as a reverse transcriptase that adds simple sequence repeats to chromosome ends by copying a template sequence within the RNA component of the enzyme. Catalyzes the RNA-dependent extension of 3'-chromosomal termini with the 6-nucleotide telomeric repeat unit, 5'-TTAGGG-3'. The catalytic cycle involves primer binding, primer extension and release of product once the template boundary has been reached or nascent product translocation followed by further extension. More active on substrates containing 2 or 3 telomeric repeats. Telomerase activity is regulated by a number of factors including telomerase complex-associated proteins, chaperones and polypeptide modifiers. Modulates Wnt signaling. Plays important roles in aging and antiapoptosis. The sequence is that of Telomerase reverse transcriptase (TERT) from Bos taurus (Bovine).